The sequence spans 120 residues: Small ribosomal subunit protein uS13 (120 aa).

A disordered region spans residues 96–120 (PCRGQRTRTNARTRKGPRKAIAGKK).

This sequence belongs to the universal ribosomal protein uS13 family. As to quaternary structure, part of the 30S ribosomal subunit. Forms a loose heterodimer with protein S19. Forms two bridges to the 50S subunit in the 70S ribosome.

Functionally, located at the top of the head of the 30S subunit, it contacts several helices of the 16S rRNA. In the 70S ribosome it contacts the 23S rRNA (bridge B1a) and protein L5 of the 50S subunit (bridge B1b), connecting the 2 subunits; these bridges are implicated in subunit movement. Contacts the tRNAs in the A and P-sites. This chain is Small ribosomal subunit protein uS13, found in Neisseria gonorrhoeae (strain ATCC 700825 / FA 1090).